The following is a 400-amino-acid chain: Protein phosphatase methylesterase 1 (400 aa).

The segment at 1–72 is disordered; sequence MSDLQRTWAK…NQKLFARPQG (72 aa). Acidic residues predominate over residues 19–28; that stretch reads PFDEPQEEQG. Over residues 44–54 the composition is skewed to low complexity; that stretch reads SSASSASSVSS. Positions 55-64 are enriched in polar residues; sequence TGTIIPSPNQ. Residues Ser202, Asp228, and His358 contribute to the active site.

Belongs to the AB hydrolase superfamily.

It catalyses the reaction [phosphatase 2A protein]-C-terminal L-leucine methyl ester + H2O = [phosphatase 2A protein]-C-terminal L-leucine + methanol + H(+). Functionally, demethylates proteins that have been reversibly carboxymethylated. Demethylates the phosphatase PP2A catalytic subunit. The sequence is that of Protein phosphatase methylesterase 1 (PPE1) from Gibberella zeae (strain ATCC MYA-4620 / CBS 123657 / FGSC 9075 / NRRL 31084 / PH-1) (Wheat head blight fungus).